The following is a 319-amino-acid chain: Urease accessory protein UreD (319 aa).

Residues 298-319 (QEQPLPPSSFKTNTAVPAVRTH) are disordered.

This sequence belongs to the UreD family. UreD, UreF and UreG form a complex that acts as a GTP-hydrolysis-dependent molecular chaperone, activating the urease apoprotein by helping to assemble the nickel containing metallocenter of UreC. The UreE protein probably delivers the nickel.

The protein localises to the cytoplasm. Its function is as follows. Required for maturation of urease via the functional incorporation of the urease nickel metallocenter. This chain is Urease accessory protein UreD, found in Synechococcus sp. (strain WH7805).